A 275-amino-acid polypeptide reads, in one-letter code: MGLMLIDWCALALVVFIGLPHGALDAAISFSMISSAKRIARLAGILLIYLLLATAFFLIWYQLPAFSLLIFLLISIIHFGMADFNASPSKLKWPHIIAHGGVVTVWLPLIQKNEVTKLFSILTNGPTPILWDILLIFFLCWSIGVCLHTYETLRSKHYNIAFELIGLIFLAWYAPPLVTFATYFCFIHSRRHFSFVWKQLQHMSSKKMMIGSAIILSCTSWLIGGGIYFFLNSKMIASEAALQTVFIGLAALTVPHMILIDFIFRPHSSRIKIKN.

The next 3 membrane-spanning stretches (helical) occupy residues 1 to 21 (MGLM…GLPH), 36 to 56 (AKRI…ATAF), and 57 to 77 (FLIW…ISII). Residue His-21 participates in Fe cation binding. Residue His-78 participates in Fe cation binding. A run of 3 helical transmembrane segments spans residues 91-111 (LKWP…PLIQ), 127-147 (TPIL…GVCL), and 160-180 (IAFE…LVTF). Fe cation-binding residues include His-188 and His-192. Helical transmembrane passes span 210-230 (IGSA…IYFF) and 244-264 (TVFI…DFIF).

It belongs to the Brp/Blh beta-carotene diooxygenase family. As to quaternary structure, homodimer. The cofactor is Fe(2+).

The protein localises to the cell membrane. It catalyses the reaction all-trans-beta-carotene + O2 = 2 all-trans-retinal. In terms of biological role, catalyzes the cleavage of beta-carotene at its central double bond (15,15') to yield two molecules of all-trans-retinal. Exhibits the highest activity for beta-carotene, followed by beta-cryptoxanthin, beta-apo-4'-carotenal, alpha-carotene, and gamma-carotene in decreasing order, but has no activity on beta-apo-8'-carotenal, beta-apo-12'-carotenal, lutein, zeaxanthin, or lycopene, suggesting that the presence of one unsubstituted beta-ionone ring in a substrate with a molecular weight greater than C35 seems to be essential for enzyme activity. The polypeptide is Beta-carotene 15,15'-dioxygenase (blh) (Uncultured marine bacterium 66A03).